The chain runs to 347 residues: Spermidine/putrescine import ATP-binding protein PotA (347 aa).

Residues 6–238 (LEIRNLSHYY…PKTKFVADFI (233 aa)) form the ABC transporter domain. 40–47 (GPSGCGKT) contributes to the ATP binding site.

Belongs to the ABC transporter superfamily. Spermidine/putrescine importer (TC 3.A.1.11.1) family. In terms of assembly, the complex is composed of two ATP-binding proteins (PotA), two transmembrane proteins (PotB and PotC) and a solute-binding protein (PotD).

It localises to the cell inner membrane. It carries out the reaction ATP + H2O + polyamine-[polyamine-binding protein]Side 1 = ADP + phosphate + polyamineSide 2 + [polyamine-binding protein]Side 1.. Functionally, part of the ABC transporter complex PotABCD involved in spermidine/putrescine import. Responsible for energy coupling to the transport system. This chain is Spermidine/putrescine import ATP-binding protein PotA, found in Borrelia garinii subsp. bavariensis (strain ATCC BAA-2496 / DSM 23469 / PBi) (Borreliella bavariensis).